The sequence spans 94 residues: Exodeoxyribonuclease 7 small subunit (94 aa).

The protein belongs to the XseB family. Heterooligomer composed of large and small subunits.

It is found in the cytoplasm. The catalysed reaction is Exonucleolytic cleavage in either 5'- to 3'- or 3'- to 5'-direction to yield nucleoside 5'-phosphates.. Its function is as follows. Bidirectionally degrades single-stranded DNA into large acid-insoluble oligonucleotides, which are then degraded further into small acid-soluble oligonucleotides. This is Exodeoxyribonuclease 7 small subunit from Ralstonia nicotianae (strain ATCC BAA-1114 / GMI1000) (Ralstonia solanacearum).